A 155-amino-acid polypeptide reads, in one-letter code: Protein-export protein SecB (155 aa).

This sequence belongs to the SecB family. As to quaternary structure, homotetramer, a dimer of dimers. One homotetramer interacts with 1 SecA dimer.

The protein resides in the cytoplasm. One of the proteins required for the normal export of preproteins out of the cell cytoplasm. It is a molecular chaperone that binds to a subset of precursor proteins, maintaining them in a translocation-competent state. It also specifically binds to its receptor SecA. This is Protein-export protein SecB from Vibrio atlanticus (strain LGP32) (Vibrio splendidus (strain Mel32)).